The following is a 37-amino-acid chain: Cytochrome b6-f complex subunit 5 (37 aa).

Residues 5–25 (LLCGIVLGLIPVTLAGLFFAA) traverse the membrane as a helical segment.

It belongs to the PetG family. In terms of assembly, the 4 large subunits of the cytochrome b6-f complex are cytochrome b6, subunit IV (17 kDa polypeptide, PetD), cytochrome f and the Rieske protein, while the 4 small subunits are PetG, PetL, PetM and PetN. The complex functions as a dimer.

It is found in the cellular thylakoid membrane. Component of the cytochrome b6-f complex, which mediates electron transfer between photosystem II (PSII) and photosystem I (PSI), cyclic electron flow around PSI, and state transitions. PetG is required for either the stability or assembly of the cytochrome b6-f complex. This Thermosynechococcus vestitus (strain NIES-2133 / IAM M-273 / BP-1) protein is Cytochrome b6-f complex subunit 5.